A 118-amino-acid chain; its full sequence is NADPH-dependent 7-cyano-7-deazaguanine reductase (118 aa).

Residue Cys-34 is the Thioimide intermediate of the active site. The Proton donor role is filled by Asp-41. Substrate-binding positions include 56–58 (VEL) and 75–76 (HE).

This sequence belongs to the GTP cyclohydrolase I family. QueF type 1 subfamily.

It is found in the cytoplasm. It catalyses the reaction 7-aminomethyl-7-carbaguanine + 2 NADP(+) = 7-cyano-7-deazaguanine + 2 NADPH + 3 H(+). It functions in the pathway tRNA modification; tRNA-queuosine biosynthesis. Functionally, catalyzes the NADPH-dependent reduction of 7-cyano-7-deazaguanine (preQ0) to 7-aminomethyl-7-deazaguanine (preQ1). This chain is NADPH-dependent 7-cyano-7-deazaguanine reductase, found in Halorhodospira halophila (strain DSM 244 / SL1) (Ectothiorhodospira halophila (strain DSM 244 / SL1)).